Reading from the N-terminus, the 415-residue chain is Intron-encoded DNA endonuclease aI3 (415 aa).

Residues 1–81 form a COX1 exons 1 to 3 encoded region; sequence MVQRWLYSTN…MPALIGGFGN (81 aa). 2 helical membrane-spanning segments follow: residues 16–36 and 57–77; these read VLYFMLAIFSGMAGTAMSLII and VLVVGHAVLMIFFLVMPALIG. A COX1 intron 3 encoded region spans residues 82-415; it reads QKRYESNNNN…HLKNTYLENK (334 aa).

The protein in the C-terminal section; belongs to the LAGLIDADG endonuclease family. Mg(2+) is required as a cofactor. The mature protein may arise from proteolytic cleavage of an in-frame translation of some COX1 exons plus the intron containing the aI3 open reading frame.

It is found in the mitochondrion. The protein resides in the membrane. Its function is as follows. Mitochondrial DNA endonuclease involved in intron homing. It introduces a specific double-strand break in the DNA of the COX1 gene and thus mediates the insertion of an intron, containing its own coding sequence (group I intron), into an intronless gene. Recognizes with high specificity and cleaves the sequence 5'-GGTTTTGGTAACTATTTATTAC-3'. In Saccharomyces cerevisiae (strain ATCC 204508 / S288c) (Baker's yeast), this protein is Intron-encoded DNA endonuclease aI3 (AI3).